Reading from the N-terminus, the 220-residue chain is Octanoyltransferase (220 aa).

Positions 29–217 (GRAPEMIWLL…CFEETFGPLP (189 aa)) constitute a BPL/LPL catalytic domain. Substrate-binding positions include 68–75 (RGGQYTYH), 148–150 (AIG), and 161–163 (GLS). Cys179 (acyl-thioester intermediate) is an active-site residue.

The protein belongs to the LipB family.

It is found in the cytoplasm. The catalysed reaction is octanoyl-[ACP] + L-lysyl-[protein] = N(6)-octanoyl-L-lysyl-[protein] + holo-[ACP] + H(+). It functions in the pathway protein modification; protein lipoylation via endogenous pathway; protein N(6)-(lipoyl)lysine from octanoyl-[acyl-carrier-protein]: step 1/2. Functionally, catalyzes the transfer of endogenously produced octanoic acid from octanoyl-acyl-carrier-protein onto the lipoyl domains of lipoate-dependent enzymes. Lipoyl-ACP can also act as a substrate although octanoyl-ACP is likely to be the physiological substrate. This Dinoroseobacter shibae (strain DSM 16493 / NCIMB 14021 / DFL 12) protein is Octanoyltransferase.